Here is a 345-residue protein sequence, read N- to C-terminus: uncharacterized protein (345 aa).

The protein belongs to the transketolase family. It depends on thiamine diphosphate as a cofactor.

This is an uncharacterized protein from Sinorhizobium fredii (strain NBRC 101917 / NGR234).